The sequence spans 186 residues: MNLKVLREEARSILLDIVERSAIKKGQLFVLGLSSSEVLGGRIGQHSSLEVGEVIVKLILEELSFRGIHLAVQGCEHINRALVLEESVAEEYRLEIVNVLPSLHAGGSGQLAAFKYMKQPVEVEAIAAHAGLDIGDTSIGMHVKRVQVPLVPIQRELGGAHVTALASRPKLIGGVRARYQPDPIRK.

The protein belongs to the UPF0340 family.

The chain is UPF0340 protein SEQ_1951 from Streptococcus equi subsp. equi (strain 4047).